A 148-amino-acid polypeptide reads, in one-letter code: Nucleoside diphosphate kinase 1 (148 aa).

Residues lysine 9, phenylalanine 57, arginine 85, threonine 91, arginine 102, and asparagine 112 each coordinate ATP. Residue histidine 115 is the Pros-phosphohistidine intermediate of the active site.

The protein belongs to the NDK family. Requires Mg(2+) as cofactor.

The catalysed reaction is a 2'-deoxyribonucleoside 5'-diphosphate + ATP = a 2'-deoxyribonucleoside 5'-triphosphate + ADP. The enzyme catalyses a ribonucleoside 5'-diphosphate + ATP = a ribonucleoside 5'-triphosphate + ADP. Functionally, major role in the synthesis of nucleoside triphosphates other than ATP. The ATP gamma phosphate is transferred to the NDP beta phosphate via a ping-pong mechanism, using a phosphorylated active-site intermediate. This is Nucleoside diphosphate kinase 1 from Nicotiana tabacum (Common tobacco).